Here is a 1066-residue protein sequence, read N- to C-terminus: Vinculin (1066 aa).

An N-terminal globular head region spans residues 1–835 (MPVFHTRTIE…GAVAKVREAF (835 aa)). Ser97 is subject to Phosphoserine. The talin-interaction stretch occupies residues 168 to 208 (MTKMAKMIDERQQELTHQEHRVMLVNSMNTVKELLPVLISA). Lys173 carries the N6-acetyllysine modification. Tandem repeats lie at residues 259–369 (ASKD…KVEN), 370–479 (AARK…KTNR), and 480–589 (AVAN…QMQE). The interval 259 to 589 (ASKDTEAMKR…LKDLKAQMQE (331 aa)) is 3 X 112 AA tandem repeats. Residues Ser260, Ser272, Ser275, Ser290, Ser346, and Ser434 each carry the phosphoserine modification. Lys496 carries the post-translational modification N6-acetyllysine. Tyr537 bears the Phosphotyrosine mark. Phosphoserine occurs at positions 574, 579, and 600. Thr604 and Thr672 each carry phosphothreonine. A Phosphoserine modification is found at Ser721. The tract at residues 741-764 (MANIQPQMLVAGATSIARRANRIL) is interaction with ACTN4. 2 positions are modified to phosphoserine: Ser795 and Ser809. The residue at position 822 (Tyr822) is a Phosphotyrosine. A linker (Pro-rich) region spans residues 836–878 (QPQEPDFPPPPPDLEQLRLTDELAPPKPPLPEGEVPPPRPPPP). Residues 857–887 (ELAPPKPPLPEGEVPPPRPPPPEEKDEEFPE) are disordered. A compositionally biased stretch (pro residues) spans 860–876 (PPKPPLPEGEVPPPRPP). The C-terminal tail stretch occupies residues 879-1066 (EEKDEEFPEQ…RWVRKTPWYQ (188 aa)). Facilitates phospholipid membrane insertion regions lie at residues 935–978 (RLVR…KRIR) and 1052–1066 (AGFTLRWVRKTPWYQ). The residue at position 1065 (Tyr1065) is a Phosphotyrosine; by SRC-type Tyr-kinases.

The protein belongs to the vinculin/alpha-catenin family. Exhibits self-association properties. Part of a complex composed of THSD1, PTK2/FAK1, TLN1 and VCL. Interacts with APBB1IP, NRAP and TLN1. Interacts with SYNM. Interacts with CTNNB1 and this interaction is necessary for its localization to the cell-cell junctions and for its function in regulating cell surface expression of E-cadherin. Interacts with SORBS1. Interacts with SYNM. Interacts with CTNNA1. Binds to ACTN4; this interaction triggers conformational changes. Interacts with FLII. Phosphorylated; on serines, threonines and tyrosines. Phosphorylation on Tyr-1065 in activated platelets affects head-tail interactions and cell spreading but has no effect on actin binding nor on localization to focal adhesion plaques. In terms of processing, acetylated; mainly by myristic acid but also by a small amount of palmitic acid.

Its subcellular location is the cell membrane. The protein localises to the cell junction. The protein resides in the adherens junction. It is found in the focal adhesion. It localises to the cytoplasm. Its subcellular location is the cytoskeleton. The protein localises to the sarcolemma. The protein resides in the cell projection. It is found in the podosome. Its function is as follows. Actin filament (F-actin)-binding protein involved in cell-matrix adhesion and cell-cell adhesion. Regulates cell-surface E-cadherin expression and potentiates mechanosensing by the E-cadherin complex. May also play important roles in cell morphology and locomotion. The chain is Vinculin (Vcl) from Mus musculus (Mouse).